The chain runs to 294 residues: uncharacterized protein (294 aa).

The next 3 membrane-spanning stretches (helical) occupy residues 21-41 (AIVA…TFTF), 51-71 (PIIW…LWAA), and 77-97 (ILFS…VFLF). The interval 156 to 176 (HPVPFPAEPGSPDPVSPPPPI) is disordered. Residues 184-215 (ERAESLHAGNIELAEDLQRIQEMERNLENERS) are a coiled coil. Residues 265-277 (QQENESRLEERRF) are compositionally biased toward basic and acidic residues. The segment at 265–294 (QQENESRLEERRFQSHSTNSLFEADSSRDN) is disordered.

Its subcellular location is the mitochondrion membrane. This is an uncharacterized protein from Arabidopsis thaliana (Mouse-ear cress).